The chain runs to 253 residues: Putative tyrosine-protein phosphatase OCA1 (253 aa).

Basic and acidic residues predominate over residues 1 to 21 (MHRTSIVEELERHQQDQKADQ). Positions 1-84 (MHRTSIVEEL…PRMKTIVKPP (84 aa)) are disordered. Polar residues predominate over residues 27-65 (SDASNSALQESSDPRLSTTDNTNTPEINVNDQQQEQQVA). The Tyrosine-protein phosphatase domain occupies 93–249 (NFGPVERNLY…IIVYPESAPE (157 aa)). The active-site Phosphocysteine intermediate is the Cys-186.

It belongs to the protein-tyrosine phosphatase family.

Its subcellular location is the cytoplasm. The enzyme catalyses O-phospho-L-tyrosyl-[protein] + H2O = L-tyrosyl-[protein] + phosphate. Its function is as follows. Putative tyrosine-protein phosphatase required for protection against superoxide stress. This is Putative tyrosine-protein phosphatase OCA1 (OCA1) from Yarrowia lipolytica (strain CLIB 122 / E 150) (Yeast).